We begin with the raw amino-acid sequence, 650 residues long: MSSQSLYKVSGNIAANALVNNEQYKTMYQESIVNPEGFWREHGKRIDWIKPYTKIKKTSFDDHNLSINWFYDGTLNASANCLDRHLSEHSDRVAIIWEGDNASEQRKITYGELHADVCKFANALRSQGVRRGDIVTIYMPMVPEAAVAMLACARIGAVHSVVFGGFSPDSIASRVIDGKSKVVITSDEGMRGGRAIPLKRNIDDALNHPDVTSVEKVIVLKRTGGKIDWVEGRDVWWHSLLETASEHCQPEEMGAEDPLFLLYTSGSTGNPKGVLHTTGGYMVYASMTHEYVFDYKAGEVYWCTADVGWITGHSYMVYGPLANGATVLIHEGVPNHPSPARLGEMIDRHKVNILYTAPTLIRALMAEGKQHFDQFDGSTLRIMGSVGEPINPEAWRWYHEVIGHEHCPIVDTWWQTETGGILITPLPGATDTKPGSATRPFFGVQPALVDNMGNILEGENEGNLVLLDSWPGQMRTVYGDHERFVLTYFKTFRGMYFTGDGARRDEDGYYWITGRVDDVINVSGHRLGTAEVESALVSHELVAEAAVVGYPHDIKGQGIYAYVTLTRGTEESEELRQELRQWVRKEIGALATPDLIQWASGLPKTRSGKIMRRFLRKIAANEVTNLGDASTLADPAVIETLIETRLNRTE.

CoA is bound by residues 191–194 (RGGR), threonine 311, and asparagine 335. ATP contacts are provided by residues 387–389 (GEP), 411–416 (DTWWQT), aspartate 500, and arginine 515. Serine 523 is a CoA binding site. Arginine 526 serves as a coordination point for ATP. Mg(2+) is bound by residues valine 537, histidine 539, and valine 542. Arginine 584 is a CoA binding site. N6-acetyllysine is present on lysine 609.

It belongs to the ATP-dependent AMP-binding enzyme family. Requires Mg(2+) as cofactor. In terms of processing, acetylated. Deacetylation by the SIR2-homolog deacetylase activates the enzyme.

It catalyses the reaction acetate + ATP + CoA = acetyl-CoA + AMP + diphosphate. In terms of biological role, catalyzes the conversion of acetate into acetyl-CoA (AcCoA), an essential intermediate at the junction of anabolic and catabolic pathways. AcsA undergoes a two-step reaction. In the first half reaction, AcsA combines acetate with ATP to form acetyl-adenylate (AcAMP) intermediate. In the second half reaction, it can then transfer the acetyl group from AcAMP to the sulfhydryl group of CoA, forming the product AcCoA. The chain is Acetyl-coenzyme A synthetase from Shewanella putrefaciens (strain CN-32 / ATCC BAA-453).